The following is an 809-amino-acid chain: Leucine-rich repeat and calponin homology domain-containing protein (809 aa).

Residues 27–53 (GSASLPGSGTGSGSGIGHAGNTSSSTS) are disordered. A compositionally biased stretch (gly residues) spans 34–44 (SGTGSGSGIGH). LRR repeat units follow at residues 72–96 (EAHF…GTKY), 98–121 (LTDT…VTTF), 122–144 (AFLE…VKQL), 145–168 (SSLT…CFLP), 170–189 (QVLL…LGRL), 191–213 (QTLT…LGEL), 214–236 (RSLR…LTCL), 238–258 (LISL…IRHM), and 260–282 (TLVE…CMRG). Disordered stretches follow at residues 295 to 373 (TKDE…LHCV), 423 to 442 (LSYA…QDDD), and 490 to 550 (KHPN…VDDV). Positions 319–336 (HNSSGNVLEASTTGSTNN) are enriched in polar residues. Over residues 351 to 368 (GLDKRWSHDAPTKSKTDS) the composition is skewed to basic and acidic residues. Positions 518–532 (NTLPKSIMKQNSNQI) are enriched in polar residues. The Calponin-homology (CH) domain maps to 662-776 (QREETELMSQ…TVGELFRLHG (115 aa)). Residues 783 to 809 (GNSSGAATPTKSPTRTTRATMSPTPLA) form a disordered region. Residues 788–809 (AATPTKSPTRTTRATMSPTPLA) show a composition bias toward polar residues.

The protein resides in the cytoplasm. Its subcellular location is the cytoskeleton. It is found in the cell cortex. It localises to the cleavage furrow. Its function is as follows. May play a role in the stabilization of the actin-rich cell cortex during cell division. This chain is Leucine-rich repeat and calponin homology domain-containing protein, found in Drosophila melanogaster (Fruit fly).